The following is a 129-amino-acid chain: MAKLTRKIPKKTKRKFSRGLVHIQVSFNNTIVTITNLKGDVLAWSSAGACGFKGARKGTPFAAQIVAETAARKSFDRGLKQAQVLVKGPGPGRDKALVGLFKAGIQISLIRDITAIPHNGCRPPKKRRL.

The protein belongs to the universal ribosomal protein uS11 family. Part of the 30S ribosomal subunit.

The protein localises to the plastid. It localises to the chloroplast. The sequence is that of Small ribosomal subunit protein uS11c from Pleurastrum terricola (Filamentous green alga).